An 874-amino-acid polypeptide reads, in one-letter code: Alanine--tRNA ligase (874 aa).

Positions 564, 568, 665, and 669 each coordinate Zn(2+).

Belongs to the class-II aminoacyl-tRNA synthetase family. It depends on Zn(2+) as a cofactor.

It is found in the cytoplasm. The enzyme catalyses tRNA(Ala) + L-alanine + ATP = L-alanyl-tRNA(Ala) + AMP + diphosphate. Its function is as follows. Catalyzes the attachment of alanine to tRNA(Ala) in a two-step reaction: alanine is first activated by ATP to form Ala-AMP and then transferred to the acceptor end of tRNA(Ala). Also edits incorrectly charged Ser-tRNA(Ala) and Gly-tRNA(Ala) via its editing domain. The protein is Alanine--tRNA ligase of Burkholderia pseudomallei (strain 1106a).